Consider the following 86-residue polypeptide: MQTLFFTLIAFVAIILLMSIGFIIKKQSLKGSCGGLSTLGIAKACDCDKPCDTHHSKLDAGDEQAKAEYEQKFAKKDDDSQFYQVK.

Residues 4-24 form a helical membrane-spanning segment; that stretch reads LFFTLIAFVAIILLMSIGFII.

The protein localises to the membrane. This is an uncharacterized protein from Haemophilus influenzae (strain ATCC 51907 / DSM 11121 / KW20 / Rd).